The following is a 149-amino-acid chain: Large ribosomal subunit protein uL13 (149 aa).

This sequence belongs to the universal ribosomal protein uL13 family. As to quaternary structure, part of the 50S ribosomal subunit.

In terms of biological role, this protein is one of the early assembly proteins of the 50S ribosomal subunit, although it is not seen to bind rRNA by itself. It is important during the early stages of 50S assembly. The polypeptide is Large ribosomal subunit protein uL13 (Borrelia turicatae (strain 91E135)).